Reading from the N-terminus, the 116-residue chain is Bacterial microcompartment shell protein CutR (116 aa).

The BMC circularly permuted domain occupies 10–108 (RIIQESVPGK…LEYFKNSLGF (99 aa)).

It belongs to the EutS/PduU family. As to quaternary structure, has been crystallized in 5 structures (all are mutated, 3 have an N-terminal His-tag), most are homohexameric with a central pore. In two the homohexamer lies flat with a beta-barrel on the flat face created by the protruding N termini of the six chains. In 2 others the hexamer is not flat but has a six-fold screw axis; the screw pitch is 33.8 or 41.9 Angstroms depending on the structure. Interacts with the BMC major shell protein.

The protein localises to the bacterial microcompartment. Its pathway is amine and polyamine metabolism; choline degradation. Functionally, a minor shell protein of the choline degradation-specific bacterial microcompartment (BMC). Proteins such as this one with circularly permuted BMC domains may play a key role in conferring heterogeneity and flexibility in this BMC. This chain is Bacterial microcompartment shell protein CutR, found in Streptococcus intermedius (strain ATCC 27335 / DSM 20573 / CCUG 32759 / CIP 103248 / JCM 12996 / LMG 17840 / NCTC 11324 / SK54 / 1877).